The primary structure comprises 142 residues: Large ribosomal subunit protein uL13 (142 aa).

This sequence belongs to the universal ribosomal protein uL13 family. In terms of assembly, part of the 50S ribosomal subunit.

In terms of biological role, this protein is one of the early assembly proteins of the 50S ribosomal subunit, although it is not seen to bind rRNA by itself. It is important during the early stages of 50S assembly. The chain is Large ribosomal subunit protein uL13 from Ralstonia pickettii (strain 12J).